The sequence spans 238 residues: tRNA (guanine-N(7)-)-methyltransferase (238 aa).

Positions 68, 93, 120, and 143 each coordinate S-adenosyl-L-methionine. Aspartate 143 is a catalytic residue. Substrate contacts are provided by residues lysine 147, aspartate 179, and 216 to 219 (TKFE).

The protein belongs to the class I-like SAM-binding methyltransferase superfamily. TrmB family.

It carries out the reaction guanosine(46) in tRNA + S-adenosyl-L-methionine = N(7)-methylguanosine(46) in tRNA + S-adenosyl-L-homocysteine. Its pathway is tRNA modification; N(7)-methylguanine-tRNA biosynthesis. Functionally, catalyzes the formation of N(7)-methylguanine at position 46 (m7G46) in tRNA. The sequence is that of tRNA (guanine-N(7)-)-methyltransferase from Shewanella frigidimarina (strain NCIMB 400).